We begin with the raw amino-acid sequence, 85 residues long: U4-theraphotoxin-Hhn1l (85 aa).

An N-terminal signal peptide occupies residues 1 to 22; the sequence is MKVTLIAFLTCAAVLVLHTTAA. A propeptide spanning residues 23 to 48 is cleaved from the precursor; it reads EELEAESQLMGVGMPDTELAAVDEER. 3 disulfide bridges follow: C52/C66, C56/C77, and C71/C82.

The protein belongs to the neurotoxin 12 (Hwtx-2) family. 02 (Hwtx-2) subfamily. As to expression, expressed by the venom gland.

Its subcellular location is the secreted. In terms of biological role, postsynaptic neurotoxin. This Cyriopagopus hainanus (Chinese bird spider) protein is U4-theraphotoxin-Hhn1l.